We begin with the raw amino-acid sequence, 141 residues long: Large ribosomal subunit protein uL22 (141 aa).

The segment at 108-141 is disordered; that stretch reads KSEEKKTVAKKTTTTKAPAKKTTSTKKATVKKES. Positions 117-134 are enriched in low complexity; the sequence is KKTTTTKAPAKKTTSTKK.

It belongs to the universal ribosomal protein uL22 family. In terms of assembly, part of the 50S ribosomal subunit.

Functionally, this protein binds specifically to 23S rRNA; its binding is stimulated by other ribosomal proteins, e.g. L4, L17, and L20. It is important during the early stages of 50S assembly. It makes multiple contacts with different domains of the 23S rRNA in the assembled 50S subunit and ribosome. The globular domain of the protein is located near the polypeptide exit tunnel on the outside of the subunit, while an extended beta-hairpin is found that lines the wall of the exit tunnel in the center of the 70S ribosome. In Campylobacter jejuni subsp. jejuni serotype O:2 (strain ATCC 700819 / NCTC 11168), this protein is Large ribosomal subunit protein uL22.